The primary structure comprises 256 residues: Type III pantothenate kinase (256 aa).

Residue 6-13 (DIGNTHTV) coordinates ATP. Residues Tyr100 and 107–110 (GADR) contribute to the substrate site. Asp109 (proton acceptor) is an active-site residue. A K(+)-binding site is contributed by Asp129. Position 132 (Thr132) interacts with ATP. Thr184 is a binding site for substrate.

It belongs to the type III pantothenate kinase family. As to quaternary structure, homodimer. It depends on NH4(+) as a cofactor. K(+) serves as cofactor.

Its subcellular location is the cytoplasm. The catalysed reaction is (R)-pantothenate + ATP = (R)-4'-phosphopantothenate + ADP + H(+). Its pathway is cofactor biosynthesis; coenzyme A biosynthesis; CoA from (R)-pantothenate: step 1/5. Its function is as follows. Catalyzes the phosphorylation of pantothenate (Pan), the first step in CoA biosynthesis. This is Type III pantothenate kinase from Acidothermus cellulolyticus (strain ATCC 43068 / DSM 8971 / 11B).